The sequence spans 592 residues: Aspartate--tRNA(Asp/Asn) ligase (592 aa).

Residue Glu182 participates in L-aspartate binding. The tract at residues 206–209 (QIFK) is aspartate. Residue Arg228 participates in L-aspartate binding. ATP contacts are provided by residues 228 to 230 (RDE) and Gln237. His455 provides a ligand contact to L-aspartate. Glu489 provides a ligand contact to ATP. Arg496 is an L-aspartate binding site. 541–544 (GLDR) is a binding site for ATP.

This sequence belongs to the class-II aminoacyl-tRNA synthetase family. Type 1 subfamily. In terms of assembly, homodimer.

The protein resides in the cytoplasm. It carries out the reaction tRNA(Asx) + L-aspartate + ATP = L-aspartyl-tRNA(Asx) + AMP + diphosphate. Its function is as follows. Aspartyl-tRNA synthetase with relaxed tRNA specificity since it is able to aspartylate not only its cognate tRNA(Asp) but also tRNA(Asn). Reaction proceeds in two steps: L-aspartate is first activated by ATP to form Asp-AMP and then transferred to the acceptor end of tRNA(Asp/Asn). In Caldanaerobacter subterraneus subsp. tengcongensis (strain DSM 15242 / JCM 11007 / NBRC 100824 / MB4) (Thermoanaerobacter tengcongensis), this protein is Aspartate--tRNA(Asp/Asn) ligase.